The chain runs to 508 residues: GMP synthase [glutamine-hydrolyzing] (508 aa).

A Glutamine amidotransferase type-1 domain is found at 1-189 (MILVLDFGSQ…ALLVCGCEKT (189 aa)). Cysteine 78 functions as the Nucleophile in the catalytic mechanism. Catalysis depends on residues histidine 163 and glutamate 165. Residues 190–383 (WGMQHFAQKE…LGISQDFLMR (194 aa)) form the GMPS ATP-PPase domain. 217–223 (SGGVDST) provides a ligand contact to ATP.

In terms of assembly, homodimer.

It catalyses the reaction XMP + L-glutamine + ATP + H2O = GMP + L-glutamate + AMP + diphosphate + 2 H(+). It functions in the pathway purine metabolism; GMP biosynthesis; GMP from XMP (L-Gln route): step 1/1. Catalyzes the synthesis of GMP from XMP. The protein is GMP synthase [glutamine-hydrolyzing] of Helicobacter pylori (strain Shi470).